The following is a 203-amino-acid chain: Guanylate kinase (203 aa).

In terms of domain architecture, Guanylate kinase-like spans 5-183; the sequence is GVLYILSAPS…AVEELKSVII (179 aa). ATP is bound at residue 12–19; that stretch reads APSGAGKT.

It belongs to the guanylate kinase family.

The protein resides in the cytoplasm. The catalysed reaction is GMP + ATP = GDP + ADP. Functionally, essential for recycling GMP and indirectly, cGMP. The polypeptide is Guanylate kinase (Geobacter sulfurreducens (strain ATCC 51573 / DSM 12127 / PCA)).